A 402-amino-acid chain; its full sequence is MIDRQKVISELISPNTSKIVLLVMDGIGDIPNEEGLTPLQKANTPNLDALAKKSDLGQTIPVLPGITPGSGPGHLGLFGYDPLKYQIGRGILEALGINVEVGENDLVARGNFATIDGDIIVDRRAGRPSSEESAKVVEILNENIKEIEDVKITFYPGKEHRFVVKFTGEGLMDKLEDADPQKEGKPIKYTKALDESSKKSERIVNILLDKIKEVLKDQPKMNFALLRGFSKHPDMPKFGDVFKLKPAAVAVYPMYKGLAKLVGMEVVEAGQTIEDEFNTVKKLWNEYDFFYVHIKKTDSYGEDGNFDSKVKVIEEVDKFLPILLELNPDVLIVTGDHSTPCVMKGHSFHPVPLMIYAKNTRRGLSKLFNEFECARGSLGTIHAVDVMPLALAYAGRLEKYGA.

Belongs to the BPG-independent phosphoglycerate mutase family. A-PGAM subfamily.

The catalysed reaction is (2R)-2-phosphoglycerate = (2R)-3-phosphoglycerate. The protein operates within carbohydrate degradation; glycolysis; pyruvate from D-glyceraldehyde 3-phosphate: step 3/5. Catalyzes the interconversion of 2-phosphoglycerate and 3-phosphoglycerate. The sequence is that of Probable 2,3-bisphosphoglycerate-independent phosphoglycerate mutase from Thermosipho africanus (strain TCF52B).